We begin with the raw amino-acid sequence, 497 residues long: Vacuolar-processing enzyme beta-isozyme 1 (497 aa).

A signal peptide spans 1-23; it reads MAARCWVWGFVVALLAVAAAADG. N153 carries N-linked (GlcNAc...) asparagine glycosylation. H180 is an active-site residue. C222 serves as the catalytic Nucleophile. The cysteines at positions 255 and 269 are disulfide-linked. The N-linked (GlcNAc...) asparagine glycan is linked to N340. Cystine bridges form between C432–C462 and C444–C479.

The protein belongs to the peptidase C13 family. Auto-catalytic activation. As to expression, expressed in developing seeds.

It localises to the protein storage vacuole. It carries out the reaction Hydrolysis of proteins and small molecule substrates at -Asn-|-Xaa- bonds.. Functionally, asparagine-specific endopeptidase that may be involved in processing of proteins targeted to vacuoles. Cysteine protease required for post-translational proteolysis of seed storage proteins in the protein storage vacuole (PSV) of developing seeds, by processing of proglutelin precursor to mature glutelin subunits, thus contributing to the formation of protein crystalline structures in PSV. The protein is Vacuolar-processing enzyme beta-isozyme 1 of Oryza sativa subsp. japonica (Rice).